A 383-amino-acid chain; its full sequence is Putative glutamate--cysteine ligase 2-1 (383 aa).

Belongs to the glutamate--cysteine ligase type 2 family. YbdK subfamily.

It catalyses the reaction L-cysteine + L-glutamate + ATP = gamma-L-glutamyl-L-cysteine + ADP + phosphate + H(+). ATP-dependent carboxylate-amine ligase which exhibits weak glutamate--cysteine ligase activity. In Nocardia farcinica (strain IFM 10152), this protein is Putative glutamate--cysteine ligase 2-1.